The chain runs to 198 residues: FMN-dependent NADH:quinone oxidoreductase (198 aa).

Position 92–95 (92–95) interacts with FMN; it reads MWNL.

It belongs to the azoreductase type 1 family. Homodimer. Requires FMN as cofactor.

It catalyses the reaction 2 a quinone + NADH + H(+) = 2 a 1,4-benzosemiquinone + NAD(+). The catalysed reaction is N,N-dimethyl-1,4-phenylenediamine + anthranilate + 2 NAD(+) = 2-(4-dimethylaminophenyl)diazenylbenzoate + 2 NADH + 2 H(+). Its function is as follows. Quinone reductase that provides resistance to thiol-specific stress caused by electrophilic quinones. In terms of biological role, also exhibits azoreductase activity. Catalyzes the reductive cleavage of the azo bond in aromatic azo compounds to the corresponding amines. The protein is FMN-dependent NADH:quinone oxidoreductase of Lachnoclostridium phytofermentans (strain ATCC 700394 / DSM 18823 / ISDg) (Clostridium phytofermentans).